The chain runs to 396 residues: S-adenosylmethionine synthase 4 (396 aa).

Glu-12 contributes to the Mg(2+) binding site. Residue His-18 coordinates ATP. Glu-46 lines the K(+) pocket. L-methionine is bound by residues Glu-59 and Gln-102. ATP is bound by residues 170 to 172, 238 to 241, Asp-249, 255 to 256, Ala-272, Lys-276, and Lys-280; these read DGK, SGRF, and RK. Asp-249 contacts L-methionine. Lys-280 is a binding site for L-methionine.

It belongs to the AdoMet synthase family. In terms of assembly, homotetramer. The cofactor is Mn(2+). Mg(2+) serves as cofactor. Co(2+) is required as a cofactor. It depends on K(+) as a cofactor.

The protein localises to the cytoplasm. It carries out the reaction L-methionine + ATP + H2O = S-adenosyl-L-methionine + phosphate + diphosphate. The protein operates within amino-acid biosynthesis; S-adenosyl-L-methionine biosynthesis; S-adenosyl-L-methionine from L-methionine: step 1/1. Its function is as follows. Catalyzes the formation of S-adenosylmethionine from methionine and ATP. The reaction comprises two steps that are both catalyzed by the same enzyme: formation of S-adenosylmethionine (AdoMet) and triphosphate, and subsequent hydrolysis of the triphosphate. The polypeptide is S-adenosylmethionine synthase 4 (SAM4) (Hordeum vulgare (Barley)).